The sequence spans 595 residues: Tectonic-3 (595 aa).

Positions 1–22 are cleaved as a signal peptide; the sequence is MCTLQLHLLLLVVLMLSETARP. The interval 23–62 is disordered; that stretch reads QPSSTARAFPTSWGLEPVTPEVPTSAPPDSSESPTPWTLS. At 23–575 the chain is on the extracellular side; sequence QPSSTARAFP…ALSRGASVQK (553 aa). The span at 49 to 62 shows a compositional bias: polar residues; the sequence is PPDSSESPTPWTLS. N-linked (GlcNAc...) asparagine glycosylation is found at Asn167 and Asn336. The chain crosses the membrane as a helical span at residues 576 to 594; that stretch reads DSLVLILCVLLLGLLNSQT. Residue Lys595 is a topological domain, cytoplasmic.

This sequence belongs to the tectonic family. Part of the tectonic-like complex (also named B9 complex).

It localises to the membrane. Its function is as follows. Part of the tectonic-like complex which is required for tissue-specific ciliogenesis and may regulate ciliary membrane composition. May be involved in apoptosis regulation. Necessary for signal transduction through the sonic hedgehog (Shh) signaling pathway. In Mus musculus (Mouse), this protein is Tectonic-3 (Tctn3).